Consider the following 855-residue polypeptide: Cytosolic phospholipase A2 zeta (855 aa).

One can recognise a C2 domain in the interval 27-145; sequence EKSEPQWKHR…QLGQPCTKNF (119 aa). Ca(2+)-binding residues include aspartate 60, aspartate 66, aspartate 116, aspartate 118, and aspartate 123. The 552-residue stretch at 304–855 folds into the PLA2c domain; that stretch reads MSSSGDLDLR…RRQAGGRVGG (552 aa). Serine 393 acts as the Nucleophile in catalysis. The Proton acceptor role is filled by aspartate 685.

It depends on Ca(2+) as a cofactor. In terms of tissue distribution, strongly expressed in thyroid, expressed at intermediate level in stomach and at very low level in large intestine and prostate.

The protein resides in the cytoplasm. The protein localises to the cytosol. Its subcellular location is the cell membrane. It localises to the mitochondrion. It catalyses the reaction a 1,2-diacyl-sn-glycero-3-phosphocholine + H2O = a 1-acyl-sn-glycero-3-phosphocholine + a fatty acid + H(+). The enzyme catalyses a 1-O-alkyl-2-acyl-sn-glycero-3-phosphocholine + H2O = a 1-O-alkyl-sn-glycero-3-phosphocholine + a fatty acid + H(+). It carries out the reaction 1-hexadecanoyl-2-(9Z-octadecenoyl)-sn-glycero-3-phosphocholine + H2O = 2-(9Z-octadecenoyl)-sn-glycero-3-phosphocholine + hexadecanoate + H(+). The catalysed reaction is 1-hexadecanoyl-2-(9Z,12Z-octadecadienoyl)-sn-glycero-3-phosphocholine + H2O = (9Z,12Z)-octadecadienoate + 1-hexadecanoyl-sn-glycero-3-phosphocholine + H(+). It catalyses the reaction 1-hexadecanoyl-2-(5Z,8Z,11Z,14Z-eicosatetraenoyl)-sn-glycero-3-phosphocholine + H2O = 1-hexadecanoyl-sn-glycero-3-phosphocholine + (5Z,8Z,11Z,14Z)-eicosatetraenoate + H(+). The enzyme catalyses 1-hexadecanoyl-2-(9Z,12Z-octadecadienoyl)-sn-glycero-3-phosphoethanolamine + H2O = 1-hexadecanoyl-sn-glycero-3-phosphoethanolamine + (9Z,12Z)-octadecadienoate + H(+). It carries out the reaction 1-hexadecanoyl-2-(5Z,8Z,11Z,14Z-eicosatetraenoyl)-sn-glycero-3-phosphoethanolamine + H2O = 1-hexadecanoyl-sn-glycero-3-phosphoethanolamine + (5Z,8Z,11Z,14Z)-eicosatetraenoate + H(+). The catalysed reaction is 1-(5Z,8Z,11Z,14Z-eicosatetraenoyl)-2-O-hexadecyl-sn-glycero-3-phosphocholine + H2O = 2-O-hexadecyl-sn-glycero-3-phosphocholine + (5Z,8Z,11Z,14Z)-eicosatetraenoate + H(+). It catalyses the reaction 1-O-hexadecyl-2-(5Z,8Z,11Z,14Z)-eicosatetraenoyl-sn-glycero-3-phosphocholine + H2O = 1-O-hexadecyl-sn-glycero-3-phosphocholine + (5Z,8Z,11Z,14Z)-eicosatetraenoate + H(+). The enzyme catalyses 1-hexadecanoyl-sn-glycero-3-phosphocholine + H2O = sn-glycerol 3-phosphocholine + hexadecanoate + H(+). Its activity is regulated as follows. Stimulated by cytosolic Ca(2+). In terms of biological role, has calcium-dependent phospholipase and lysophospholipase activities with a potential role in membrane lipid remodeling and biosynthesis of lipid mediators. Preferentially hydrolyzes the ester bond of the fatty acyl group attached at sn-2 position of phospholipids (phospholipase A2 activity). Selectively hydrolyzes sn-2 arachidonoyl group from membrane phospholipids, providing the precursor for eicosanoid biosynthesis. In myocardial mitochondria, plays a major role in arachidonate release that is metabolically channeled to the formation of cardioprotective eicosanoids, epoxyeicosatrienoates (EETs). The chain is Cytosolic phospholipase A2 zeta (Pla2g4f) from Mus musculus (Mouse).